A 394-amino-acid polypeptide reads, in one-letter code: S-adenosylmethionine synthase 3 (394 aa).

E11 is a Mg(2+) binding site. An ATP-binding site is contributed by H17. E45 contacts K(+). L-methionine contacts are provided by E58 and Q101. ATP is bound by residues 169–171 (DGK), 237–240 (SGRF), D248, 254–255 (RK), A271, K275, and K279. D248 contacts L-methionine. K279 provides a ligand contact to L-methionine.

This sequence belongs to the AdoMet synthase family. In terms of assembly, homotetramer. Mn(2+) serves as cofactor. The cofactor is Mg(2+). Co(2+) is required as a cofactor. It depends on K(+) as a cofactor.

The protein resides in the cytoplasm. It catalyses the reaction L-methionine + ATP + H2O = S-adenosyl-L-methionine + phosphate + diphosphate. Its pathway is amino-acid biosynthesis; S-adenosyl-L-methionine biosynthesis; S-adenosyl-L-methionine from L-methionine: step 1/1. Its function is as follows. Catalyzes the formation of S-adenosylmethionine from methionine and ATP. The reaction comprises two steps that are both catalyzed by the same enzyme: formation of S-adenosylmethionine (AdoMet) and triphosphate, and subsequent hydrolysis of the triphosphate. The chain is S-adenosylmethionine synthase 3 (SAM3) from Hordeum vulgare (Barley).